The following is a 310-amino-acid chain: tRNA-cytidine(32) 2-sulfurtransferase (310 aa).

Residues 45–50 carry the PP-loop motif motif; it reads SGGKDS. Residues Cys-120, Cys-123, and Cys-211 each coordinate [4Fe-4S] cluster.

The protein belongs to the TtcA family. In terms of assembly, homodimer. Mg(2+) is required as a cofactor. It depends on [4Fe-4S] cluster as a cofactor.

It is found in the cytoplasm. The enzyme catalyses cytidine(32) in tRNA + S-sulfanyl-L-cysteinyl-[cysteine desulfurase] + AH2 + ATP = 2-thiocytidine(32) in tRNA + L-cysteinyl-[cysteine desulfurase] + A + AMP + diphosphate + H(+). It functions in the pathway tRNA modification. Catalyzes the ATP-dependent 2-thiolation of cytidine in position 32 of tRNA, to form 2-thiocytidine (s(2)C32). The sulfur atoms are provided by the cysteine/cysteine desulfurase (IscS) system. This is tRNA-cytidine(32) 2-sulfurtransferase from Shewanella putrefaciens (strain CN-32 / ATCC BAA-453).